The chain runs to 49 residues: Large ribosomal subunit protein bL33B (49 aa).

This sequence belongs to the bacterial ribosomal protein bL33 family.

The sequence is that of Large ribosomal subunit protein bL33B from Geobacillus kaustophilus (strain HTA426).